We begin with the raw amino-acid sequence, 251 residues long: uncharacterized protein (251 aa).

The signal sequence occupies residues 1–25; the sequence is MRKKKFLSRFSFSSLFLLCGTLLSA. C26 carries N-palmitoyl cysteine lipidation. The S-diacylglycerol cysteine moiety is linked to residue C26.

It belongs to the MG439/MG440 family.

It is found in the cell membrane. This is an uncharacterized protein from Mycoplasma pneumoniae (strain ATCC 29342 / M129 / Subtype 1) (Mycoplasmoides pneumoniae).